We begin with the raw amino-acid sequence, 65 residues long: VRDAYIAQNYNCVYFCMKDDYCNDLCTKNGASSGYCQWAGKYGNACWCYALPDNVPIRIPGKCHS.

The LCN-type CS-alpha/beta domain occupies R2–H64. 4 cysteine pairs are disulfide-bonded: C12–C63, C16–C36, C22–C46, and C26–C48.

The protein belongs to the long (4 C-C) scorpion toxin superfamily. Sodium channel inhibitor family. Alpha subfamily. In terms of tissue distribution, expressed by the venom gland.

The protein localises to the secreted. Functionally, alpha toxins bind voltage-independently at site-3 of sodium channels (Nav) and inhibit the inactivation of the activated channels, thereby blocking neuronal transmission. This contractive toxin is highly toxic to insects and barely toxic to mammals. The polypeptide is Alpha-insect toxin BotIT1 (Buthus occitanus tunetanus (Common European scorpion)).